The following is a 42-amino-acid chain: Photosystem I reaction center subunit IX (42 aa).

A helical transmembrane segment spans residues 7–27; the sequence is FLSLGPVLLVLWLSVQATLLI.

Belongs to the PsaJ family.

Its subcellular location is the cellular thylakoid membrane. May help in the organization of the PsaE and PsaF subunits. In Gloeothece citriformis (strain PCC 7424) (Cyanothece sp. (strain PCC 7424)), this protein is Photosystem I reaction center subunit IX.